The chain runs to 256 residues: Tryptophan synthase alpha chain (256 aa).

Active-site proton acceptor residues include E44 and D55.

This sequence belongs to the TrpA family. In terms of assembly, tetramer of two alpha and two beta chains.

The catalysed reaction is (1S,2R)-1-C-(indol-3-yl)glycerol 3-phosphate + L-serine = D-glyceraldehyde 3-phosphate + L-tryptophan + H2O. The protein operates within amino-acid biosynthesis; L-tryptophan biosynthesis; L-tryptophan from chorismate: step 5/5. Functionally, the alpha subunit is responsible for the aldol cleavage of indoleglycerol phosphate to indole and glyceraldehyde 3-phosphate. This Coxiella burnetii (strain CbuK_Q154) (Coxiella burnetii (strain Q154)) protein is Tryptophan synthase alpha chain.